We begin with the raw amino-acid sequence, 573 residues long: MRYSQYFIPTVKETPSDAEVISHKLMLRAGMIRKLAAGIYNYLPFGLRSIRKVEAIVREEMNRAGAIELLMPAVQPAELWKESGRWEFYGKELLRFNDRKDAEFCMGPTHEEVITDLIRKEVRSYRQLPINLYQIQGKFRDEIRPRFGLMRGREFIMKDAYSFDVNEAGADVSYEKMYKAYRRIFERCGLKFRAVEADTGTIGGSYSHEFMVLADSGEDAIVSCSACEYAANMEKAETRKGEGIEHADPRPMEHVSTPGQKSIEDVATFLGVQNTQVVKTLVLVADGEPVVALIRGDYDLNEIKLKNHLGCAELEMAEDDVVVKVTGAPTGYAGPVGLAAKVKVVADLSLEGMHNFVTGANAADTHLKNVNIGRDFSVSGFVDIRNVVIGDACPRCDSGKLEIWRGIEVGHVFKLGTKYSKALKATFLDADGKEQIIFMGCYGIGVGRTVAACIEQNHDENGIIFPIPIAPFQCIISSLSAKEDEVKAASESIYQELLEAGIEVLLDDRDERPGFKFKDADLIGIPLRIVVGAKALAEGKVELKERRSGEVEVLPIAEAIAKVKAAVKEALQV.

This sequence belongs to the class-II aminoacyl-tRNA synthetase family. ProS type 1 subfamily. In terms of assembly, homodimer.

The protein resides in the cytoplasm. The enzyme catalyses tRNA(Pro) + L-proline + ATP = L-prolyl-tRNA(Pro) + AMP + diphosphate. Its function is as follows. Catalyzes the attachment of proline to tRNA(Pro) in a two-step reaction: proline is first activated by ATP to form Pro-AMP and then transferred to the acceptor end of tRNA(Pro). As ProRS can inadvertently accommodate and process non-cognate amino acids such as alanine and cysteine, to avoid such errors it has two additional distinct editing activities against alanine. One activity is designated as 'pretransfer' editing and involves the tRNA(Pro)-independent hydrolysis of activated Ala-AMP. The other activity is designated 'posttransfer' editing and involves deacylation of mischarged Ala-tRNA(Pro). The misacylated Cys-tRNA(Pro) is not edited by ProRS. This chain is Proline--tRNA ligase, found in Citrifermentans bemidjiense (strain ATCC BAA-1014 / DSM 16622 / JCM 12645 / Bem) (Geobacter bemidjiensis).